Consider the following 967-residue polypeptide: Kinesin heavy chain (967 aa).

In terms of domain architecture, Kinesin motor spans 8–326; the sequence is NIKVICRVRP…LLFGQRAKTI (319 aa). 85–92 is an ATP binding site; the sequence is GQTSSGKT. Residues 173-314 are microtubule-binding; sequence VSSPEEVMEV…PASYNESETK (142 aa). Disordered stretches follow at residues 387 to 411 and 923 to 967; these read VPAE…NEGD and KPIR…ESKA. Residues 392-861 adopt a coiled-coil conformation; that stretch reads PATSTTSLAG…RDNADLRCEL (470 aa). The tract at residues 862–967 is globular; it reads PKLEKRLRAT…PIRMAPESKA (106 aa). Over residues 949–958 the composition is skewed to polar residues; it reads QNGPMITSTP.

This sequence belongs to the TRAFAC class myosin-kinesin ATPase superfamily. Kinesin family. Kinesin subfamily. Oligomer composed of two heavy chains and two light chains. Interacts with amyloid-beta precursor-like protein (via cytoplasmic domain).

The protein resides in the cytoplasm. It is found in the cytoskeleton. It localises to the cell projection. Its subcellular location is the axon. Its function is as follows. Kinesin is a microtubule-associated force-producing protein that may play a role in organelle transport. The sequence is that of Kinesin heavy chain from Doryteuthis pealeii (Longfin inshore squid).